The chain runs to 471 residues: Putative ETHYLENE INSENSITIVE 3-like 4 protein (471 aa).

The tract at residues 280–316 (DLKISEDQDDQESSGSKRKSESMEPSKSVYTCQNSSC) is disordered. The segment covering 304–316 (PSKSVYTCQNSSC) has biased composition (polar residues).

Belongs to the EIN3 family.

Its subcellular location is the nucleus. Its function is as follows. Putative transcription factor that may be involved in the ethylene response pathway. The protein is Putative ETHYLENE INSENSITIVE 3-like 4 protein (EIL4) of Arabidopsis thaliana (Mouse-ear cress).